A 402-amino-acid chain; its full sequence is Galactoside 2-alpha-L-fucosyltransferase (402 aa).

At 1-6 (MRYNSN) the chain is on the cytoplasmic side. The chain crosses the membrane as a helical; Signal-anchor for type II membrane protein span at residues 7-27 (YLMYFCLVLGIFANIYVIIKI). Over 28–402 (TLGSSHILEY…TDLNGKISKY (375 aa)) the chain is Lumenal. Residues N119, N175, and N301 are each glycosylated (N-linked (GlcNAc...) asparagine).

It belongs to the glycosyltransferase 11 family. May form oligomers. In terms of processing, N-glycosylated. Expression is restricted to pharyngeal neurons and gland cells.

Its subcellular location is the golgi apparatus. It localises to the golgi stack membrane. Its pathway is protein modification; protein glycosylation. Functionally, selectively catalyzes the addition of fucose in alpha 1-2 linkage to Gal-beta-(1-&gt;3)-GalNAc-alpha-R, Gal-beta-(1-&gt;3)-(GlcNAc-beta-(1-&gt;6))-GalNAc-alpha-R and Gal-beta-(1-&gt;3)-GalNAc acceptors but not Gal-beta-(1-&gt;3)-GlcNAc-beta-(1-&gt;3)-Gal-beta-(1-&gt;4)-Glc in vitro. In Caenorhabditis elegans, this protein is Galactoside 2-alpha-L-fucosyltransferase.